Here is a 386-residue protein sequence, read N- to C-terminus: NifS-like protein (386 aa).

Residues 58–59 (SE) and 184–186 (SIN) each bind pyridoxal 5'-phosphate.

It belongs to the class-V pyridoxal-phosphate-dependent aminotransferase family. NifS/IscS subfamily. Pyridoxal 5'-phosphate serves as cofactor.

Its subcellular location is the virion. This chain is NifS-like protein, found in Ornithodoros (relapsing fever ticks).